Reading from the N-terminus, the 248-residue chain is MFSLALRARASGLTAQWGRHARNLHKTAVQNGAGGALFVHRDTPENNPDTPFDFTPENYERIEAIVRNYPEGHRAAAVLPVLDLAQRQNGWLPISAMNKVAEVLQVPPMRVYEVATFYTMYNRKPVGKYHIQVCTTTPCMLRDSDSILETLQRKLGIKVGETTPDKLFTLIEVECLGACVNAPMVQINDDYYEDLTPKDIEEIIDELRAGKVPKPGPRSGRFCCEPAGGLTSLTEPPKGPGFGVQAGL.

The N-terminal 31 residues, 1–31 (MFSLALRARASGLTAQWGRHARNLHKTAVQN), are a transit peptide targeting the mitochondrion. Residues cysteine 134, cysteine 139, cysteine 175, and cysteine 179 each coordinate [2Fe-2S] cluster. The residue at position 192 (tyrosine 192) is a Phosphotyrosine; by SRC. The segment at 229–248 (GLTSLTEPPKGPGFGVQAGL) is disordered.

It belongs to the complex I 24 kDa subunit family. In terms of assembly, core subunit of respiratory chain NADH dehydrogenase (Complex I) which is composed of 45 different subunits. This is a component of the flavoprotein-sulfur (FP) fragment of the enzyme. Requires [2Fe-2S] cluster as cofactor.

Its subcellular location is the mitochondrion inner membrane. The enzyme catalyses a ubiquinone + NADH + 5 H(+)(in) = a ubiquinol + NAD(+) + 4 H(+)(out). Its function is as follows. Core subunit of the mitochondrial membrane respiratory chain NADH dehydrogenase (Complex I) which catalyzes electron transfer from NADH through the respiratory chain, using ubiquinone as an electron acceptor. Parts of the peripheral arm of the enzyme, where the electrons from NADH are accepted by flavin mononucleotide (FMN) and then passed along a chain of iron-sulfur clusters by electron tunnelling to the final acceptor ubiquinone. Contains one iron-sulfur cluster. In Rattus norvegicus (Rat), this protein is NADH dehydrogenase [ubiquinone] flavoprotein 2, mitochondrial.